The following is a 270-amino-acid chain: MSVDVKSDFSENESSSTPSPTTVPADVTWPHYPMMPFMQPHPLREKMLQPTFDPQIYGRWSQMGDTGFYGHPDLYPFGLPQLAANGQIPAVEAVDVKPPLSNGSSSSDSGMYPSPSDMMTPFPSTSSGAASSSELSAAAAAAANYQMRAATCYQQSVWPFMDYQQFQGFSWKMPLGNNHGKDRRSSSDGKTLPTGPGTNNVRVRTADKYRMVYSDYQRLELEKEFHTSPFITSDRKSQLSTMLSLTERQIKIWFQNRRAKDRRDKQKIRL.

Disordered stretches follow at residues 1–24 (MSVD…TTVP), 96–130 (VKPP…SGAA), and 175–201 (LGNN…TNNV). 2 stretches are compositionally biased toward low complexity: residues 14–24 (SSSTPSPTTVP) and 101–130 (SNGS…SGAA). The segment at residues 206 to 265 (ADKYRMVYSDYQRLELEKEFHTSPFITSDRKSQLSTMLSLTERQIKIWFQNRRAKDRRDK) is a DNA-binding region (homeobox).

This sequence belongs to the Caudal homeobox family. In terms of assembly, interacts with tir-1 and let-756. In terms of tissue distribution, blastomeres. Embryo. Oocytes.

It is found in the nucleus. The protein resides in the chromosome. Its subcellular location is the centromere. It localises to the kinetochore. Its function is as follows. Transcriptional activator. Interacts with promoter regions for tbx-8.9, tbx-9, elt-1, hnd-1, scrt-1, and vab-7 genes. Binds the sequence ATTTATGAC. Binds to the enhancer region of the hlh-1 gene promoter during embryonic body wall muscle development. Activates the gene for mab-5 in embryo development. Necessary for vab-7 expression in C blastomeres in the posterior of embryos. Required for posterior V6 neuroectoblast cell fate specification during postembryonic neurogenesis (patterning) which generates the characteristic ray lineage during male tail development. Binds to ced-3 promoter and activated expression which is crucial for tail-spike cell death. Has a role in E cell specification in endoderm development and body wall muscle development. The chain is Homeobox protein pal-1 (pal-1) from Caenorhabditis elegans.